A 246-amino-acid chain; its full sequence is 5-oxoprolinase subunit A (246 aa).

This sequence belongs to the LamB/PxpA family. In terms of assembly, forms a complex composed of PxpA, PxpB and PxpC.

The catalysed reaction is 5-oxo-L-proline + ATP + 2 H2O = L-glutamate + ADP + phosphate + H(+). Functionally, catalyzes the cleavage of 5-oxoproline to form L-glutamate coupled to the hydrolysis of ATP to ADP and inorganic phosphate. This Cupriavidus pinatubonensis (strain JMP 134 / LMG 1197) (Cupriavidus necator (strain JMP 134)) protein is 5-oxoprolinase subunit A.